A 306-amino-acid polypeptide reads, in one-letter code: Glutathione transport system permease protein GsiC (306 aa).

Residues Met1 to Arg8 are Cytoplasmic-facing. The chain crosses the membrane as a helical span at residues Leu9–Met29. Topologically, residues Leu30 to Thr102 are periplasmic. The 198-residue stretch at Phe95–Val292 folds into the ABC transmembrane type-1 domain. Residues Ile103–Trp123 form a helical membrane-spanning segment. Residues Arg124–Thr134 are Cytoplasmic-facing. A helical transmembrane segment spans residues Ile135–Phe155. Over Ser156 to Asp168 the chain is Periplasmic. Residues Ser169–Ala189 traverse the membrane as a helical segment. At Arg190 to Met228 the chain is on the cytoplasmic side. The helical transmembrane segment at Ile229–Val249 threads the bilayer. Topologically, residues Glu250 to Glu277 are periplasmic. A helical transmembrane segment spans residues Ile278–Ala298. Residues Ile299–Lys306 are Cytoplasmic-facing.

Belongs to the binding-protein-dependent transport system permease family. As to quaternary structure, the complex is composed of two ATP-binding proteins (GsiA), two transmembrane proteins (GsiC and GsiD) and a solute-binding protein (GsiB).

The protein localises to the cell inner membrane. Part of the ABC transporter complex GsiABCD involved in glutathione import. Probably responsible for the translocation of the substrate across the membrane. The protein is Glutathione transport system permease protein GsiC of Shigella flexneri serotype 5b (strain 8401).